The chain runs to 285 residues: Bifunctional protein FolD (285 aa).

Residues Gly165–Gly167, Thr192, and Val233 each bind NADP(+).

It belongs to the tetrahydrofolate dehydrogenase/cyclohydrolase family. In terms of assembly, homodimer.

It carries out the reaction (6R)-5,10-methylene-5,6,7,8-tetrahydrofolate + NADP(+) = (6R)-5,10-methenyltetrahydrofolate + NADPH. It catalyses the reaction (6R)-5,10-methenyltetrahydrofolate + H2O = (6R)-10-formyltetrahydrofolate + H(+). It participates in one-carbon metabolism; tetrahydrofolate interconversion. In terms of biological role, catalyzes the oxidation of 5,10-methylenetetrahydrofolate to 5,10-methenyltetrahydrofolate and then the hydrolysis of 5,10-methenyltetrahydrofolate to 10-formyltetrahydrofolate. The polypeptide is Bifunctional protein FolD (Corynebacterium jeikeium (strain K411)).